We begin with the raw amino-acid sequence, 861 residues long: DNA mismatch repair protein MutS (861 aa).

617–624 (GPNMGGKS) is an ATP binding site. Residues 799-822 (ETTSLPHEQPPAAKAKDAPQVPHQ) form a disordered region. The span at 808-820 (PPAAKAKDAPQVP) shows a compositional bias: low complexity.

Belongs to the DNA mismatch repair MutS family.

In terms of biological role, this protein is involved in the repair of mismatches in DNA. It is possible that it carries out the mismatch recognition step. This protein has a weak ATPase activity. This is DNA mismatch repair protein MutS from Pseudomonas putida (strain GB-1).